Reading from the N-terminus, the 373-residue chain is 3-dehydroquinate synthase (373 aa).

NAD(+) contacts are provided by residues 120-124 (GVVGD), 144-145 (TT), K157, K166, and 184-187 (FLKT). Zn(2+) contacts are provided by E199, H262, and H278.

Belongs to the sugar phosphate cyclases superfamily. Dehydroquinate synthase family. The cofactor is NAD(+). Requires Co(2+) as cofactor. It depends on Zn(2+) as a cofactor.

Its subcellular location is the cytoplasm. The catalysed reaction is 7-phospho-2-dehydro-3-deoxy-D-arabino-heptonate = 3-dehydroquinate + phosphate. Its pathway is metabolic intermediate biosynthesis; chorismate biosynthesis; chorismate from D-erythrose 4-phosphate and phosphoenolpyruvate: step 2/7. Functionally, catalyzes the conversion of 3-deoxy-D-arabino-heptulosonate 7-phosphate (DAHP) to dehydroquinate (DHQ). The protein is 3-dehydroquinate synthase of Clostridium tetani (strain Massachusetts / E88).